A 392-amino-acid polypeptide reads, in one-letter code: Formate-dependent phosphoribosylglycinamide formyltransferase (392 aa).

N(1)-(5-phospho-beta-D-ribosyl)glycinamide contacts are provided by residues 22-23 and Glu-82; that span reads EL. ATP is bound by residues Arg-114, Lys-155, 160–165, 195–198, and Glu-203; these read SSGKGQ and EGVV. Residues 119-308 enclose the ATP-grasp domain; the sequence is RLAAEELQLP…EFALHVRAFL (190 aa). Mg(2+) contacts are provided by Glu-267 and Glu-279. N(1)-(5-phospho-beta-D-ribosyl)glycinamide contacts are provided by residues Asp-286, Lys-355, and 362–363; that span reads RR.

This sequence belongs to the PurK/PurT family. Homodimer.

The catalysed reaction is N(1)-(5-phospho-beta-D-ribosyl)glycinamide + formate + ATP = N(2)-formyl-N(1)-(5-phospho-beta-D-ribosyl)glycinamide + ADP + phosphate + H(+). It participates in purine metabolism; IMP biosynthesis via de novo pathway; N(2)-formyl-N(1)-(5-phospho-D-ribosyl)glycinamide from N(1)-(5-phospho-D-ribosyl)glycinamide (formate route): step 1/1. Involved in the de novo purine biosynthesis. Catalyzes the transfer of formate to 5-phospho-ribosyl-glycinamide (GAR), producing 5-phospho-ribosyl-N-formylglycinamide (FGAR). Formate is provided by PurU via hydrolysis of 10-formyl-tetrahydrofolate. This Escherichia coli O1:K1 / APEC protein is Formate-dependent phosphoribosylglycinamide formyltransferase.